A 339-amino-acid polypeptide reads, in one-letter code: Methionine synthase (339 aa).

Zn(2+)-binding residues include His212, Cys214, and Cys295.

The protein belongs to the archaeal MetE family. Requires Zn(2+) as cofactor.

It functions in the pathway amino-acid biosynthesis; L-methionine biosynthesis via de novo pathway. Its function is as follows. Catalyzes the transfer of a methyl group to L-homocysteine resulting in methionine formation. The physiological methyl donor is unknown. The sequence is that of Methionine synthase from Sulfolobus acidocaldarius (strain ATCC 33909 / DSM 639 / JCM 8929 / NBRC 15157 / NCIMB 11770).